A 438-amino-acid polypeptide reads, in one-letter code: Glutamyl-tRNA reductase (438 aa).

Residues 55–58 (TCNR), Ser-118, 123–125 (ETQ), and Gln-129 contribute to the substrate site. The Nucleophile role is filled by Cys-56. Residue 198–203 (GAGDMI) participates in NADP(+) binding.

This sequence belongs to the glutamyl-tRNA reductase family. As to quaternary structure, homodimer.

It catalyses the reaction (S)-4-amino-5-oxopentanoate + tRNA(Glu) + NADP(+) = L-glutamyl-tRNA(Glu) + NADPH + H(+). Its pathway is porphyrin-containing compound metabolism; protoporphyrin-IX biosynthesis; 5-aminolevulinate from L-glutamyl-tRNA(Glu): step 1/2. Catalyzes the NADPH-dependent reduction of glutamyl-tRNA(Glu) to glutamate 1-semialdehyde (GSA). The polypeptide is Glutamyl-tRNA reductase (Polynucleobacter asymbioticus (strain DSM 18221 / CIP 109841 / QLW-P1DMWA-1) (Polynucleobacter necessarius subsp. asymbioticus)).